The primary structure comprises 279 residues: 5'-nucleotidase SurE (279 aa).

The a divalent metal cation site is built by Asp-28, Asp-29, Ser-59, and Asn-113.

The protein belongs to the SurE nucleotidase family. It depends on a divalent metal cation as a cofactor.

The protein resides in the cytoplasm. It catalyses the reaction a ribonucleoside 5'-phosphate + H2O = a ribonucleoside + phosphate. Nucleotidase that shows phosphatase activity on nucleoside 5'-monophosphates. The protein is 5'-nucleotidase SurE of Methanospirillum hungatei JF-1 (strain ATCC 27890 / DSM 864 / NBRC 100397 / JF-1).